A 279-amino-acid chain; its full sequence is Large ribosomal subunit protein uL2 (279 aa).

The disordered stretch occupies residues 223–279; it reads MAMNPVDHPMGGGEGKSKSGGGRKHPKSPWGQLAKGLKTRNKKKASSKLIVRGRKSK. The span at 232–242 shows a compositional bias: gly residues; it reads MGGGEGKSKSG. A compositionally biased stretch (basic residues) spans 259 to 279; the sequence is LKTRNKKKASSKLIVRGRKSK.

Belongs to the universal ribosomal protein uL2 family. Part of the 50S ribosomal subunit. Forms a bridge to the 30S subunit in the 70S ribosome.

Its function is as follows. One of the primary rRNA binding proteins. Required for association of the 30S and 50S subunits to form the 70S ribosome, for tRNA binding and peptide bond formation. It has been suggested to have peptidyltransferase activity; this is somewhat controversial. Makes several contacts with the 16S rRNA in the 70S ribosome. The chain is Large ribosomal subunit protein uL2 from Prosthecochloris aestuarii (strain DSM 271 / SK 413).